The following is a 624-amino-acid chain: Membrane protein insertase YidC (624 aa).

A helical membrane pass occupies residues 8–28 (MIIAIALSLAVLLGWNYFVTA). Residues 36–95 (QQQAAQVNPSQGVNPSQGVDPSQGVNASPSPKEGGPSAPVPGTLPGAAGGSPQAALARDE) form a disordered region. Positions 43-64 (NPSQGVNPSQGVDPSQGVNASP) are enriched in polar residues. A run of 5 helical transmembrane segments spans residues 370–390 (FDLL…FKAL), 396–416 (LFGN…LFFL), 470–490 (WPVL…FVTI), 526–542 (LLHL…TMFL), and 559–579 (FTFM…GLVI).

This sequence belongs to the OXA1/ALB3/YidC family. Type 1 subfamily. Interacts with the Sec translocase complex via SecD. Specifically interacts with transmembrane segments of nascent integral membrane proteins during membrane integration.

The protein localises to the cell inner membrane. Functionally, required for the insertion and/or proper folding and/or complex formation of integral membrane proteins into the membrane. Involved in integration of membrane proteins that insert both dependently and independently of the Sec translocase complex, as well as at least some lipoproteins. Aids folding of multispanning membrane proteins. This Methylobacterium sp. (strain 4-46) protein is Membrane protein insertase YidC.